The following is a 254-amino-acid chain: Alcohol dehydrogenase 1 (254 aa).

Position 10–33 (10–33) interacts with NAD(+); that stretch reads FVAGLGGIGLDTSREIVKSGPKNL. Ser-138 lines the substrate pocket. Tyr-151 (proton acceptor) is an active-site residue.

It belongs to the short-chain dehydrogenases/reductases (SDR) family. In terms of assembly, homodimer.

The enzyme catalyses a primary alcohol + NAD(+) = an aldehyde + NADH + H(+). The catalysed reaction is a secondary alcohol + NAD(+) = a ketone + NADH + H(+). The sequence is that of Alcohol dehydrogenase 1 (Adh1) from Drosophila montana (Fruit fly).